A 458-amino-acid polypeptide reads, in one-letter code: Protein unc-93 homolog A (458 aa).

5 helical membrane-spanning segments follow: residues 8 to 28 (VLVVSCGFLLLFTAYGGLQNL), 42 to 62 (TLSTLYASVLLSSMFLPPILI), 69 to 89 (WTIVGSMCCYVVFSLGNFHAN), 90 to 110 (WYTLIPTSILLGLGAAPLWSA), and 140 to 160 (IFFLVFQSSGVWGNLISSLVF). The N-linked (GlcNAc...) asparagine glycan is linked to asparagine 190. The next 7 helical transmembrane spans lie at 202–222 (TLLGIYTGCGVLAILLVAVFL), 258–275 (LCLLMFLPLYSGFQQEFL), 286–306 (CALGIHFVGYVMICFSAMTAL), 321–341 (AALYALGAAIHFSCIVVFLLW), 345–365 (TNQLPVFFVLSGLWGMSDAVW), 390–410 (LGEAIGFVIAFGYSSFLCVST), and 412–432 (LYILLGVLSLAMVGYGTVEYL).

This sequence belongs to the unc-93 family.

It localises to the cell membrane. This is Protein unc-93 homolog A (Unc93a) from Mus musculus (Mouse).